Reading from the N-terminus, the 98-residue chain is Co-chaperonin GroES (98 aa).

Belongs to the GroES chaperonin family. In terms of assembly, heptamer of 7 subunits arranged in a ring. Interacts with the chaperonin GroEL.

It is found in the cytoplasm. Functionally, together with the chaperonin GroEL, plays an essential role in assisting protein folding. The GroEL-GroES system forms a nano-cage that allows encapsulation of the non-native substrate proteins and provides a physical environment optimized to promote and accelerate protein folding. GroES binds to the apical surface of the GroEL ring, thereby capping the opening of the GroEL channel. In Micrococcus luteus (strain ATCC 4698 / DSM 20030 / JCM 1464 / CCM 169 / CCUG 5858 / IAM 1056 / NBRC 3333 / NCIMB 9278 / NCTC 2665 / VKM Ac-2230) (Micrococcus lysodeikticus), this protein is Co-chaperonin GroES.